Consider the following 216-residue polypeptide: Putative ripening-related protein 4 (216 aa).

Positions 1–25 (MAANVKVLVVLALLQLMSLHAVVHG) are cleaved as a signal peptide.

Belongs to the kiwellin family.

The protein resides in the secreted. The protein is Putative ripening-related protein 4 of Oryza sativa subsp. japonica (Rice).